Consider the following 320-residue polypeptide: MRGSVFGFVPSFRIRFFASSTHIIDTMKTLQEYLSASHAPEDLGKIIMMIADQAGPIRSAFISNQNYAGSTNSSGEDQAEMDTWADTRITSVLQESGLVRSIASEEQEDITEMSPSAKYSVVMDPLDGSSLIKVNLTVGTIVGIYEGDVLQAGNKLRAAFYMLYGPLTTLTISLGNGVSIFAMNEEGTYVLLKENVRIPEGTLCGSGGLRPEWTEKHIQYMNAIECEGGKNRYSGSFVADFHQILEYGGVYAYPATKKSASGKLRLVFEINPIGFLAVQAGGAVSNGESSTLEIVPTKVHQRTPVYVGSKGMIAKIEAIR.

4 residues coordinate Mg(2+): Glu105, Asp124, Leu126, and Asp127. Residues Asp127–Ser130, Tyr233, and Lys263 contribute to the substrate site. Position 269 (Glu269) interacts with Mg(2+).

This sequence belongs to the FBPase class 1 family. Homotetramer. It depends on Mg(2+) as a cofactor.

It localises to the cytoplasm. The enzyme catalyses beta-D-fructose 1,6-bisphosphate + H2O = beta-D-fructose 6-phosphate + phosphate. It participates in carbohydrate biosynthesis; gluconeogenesis. This is Fructose-1,6-bisphosphatase class 1 from Methanocorpusculum labreanum (strain ATCC 43576 / DSM 4855 / Z).